A 209-amino-acid chain; its full sequence is Redox-sensing transcriptional repressor Rex (209 aa).

Residues 16-55 (LYYRFIQNLSLSGKQRVSSAELSEAVKVDSATIRRDFSYF) constitute a DNA-binding region (H-T-H motif). NAD(+) is bound at residue 90–95 (GVGNLG).

This sequence belongs to the transcriptional regulatory Rex family. As to quaternary structure, homodimer.

The protein localises to the cytoplasm. Its function is as follows. Modulates transcription in response to changes in cellular NADH/NAD(+) redox state. This chain is Redox-sensing transcriptional repressor Rex, found in Bacillus anthracis (strain A0248).